We begin with the raw amino-acid sequence, 404 residues long: Ubiquitin-like modifier-activating enzyme 5 (404 aa).

5 residues coordinate ATP: glycine 83, aspartate 104, lysine 127, asparagine 150, and asparagine 184. Zn(2+) contacts are provided by cysteine 226 and cysteine 229. Cysteine 250 functions as the Glycyl thioester intermediate in the catalytic mechanism. 2 residues coordinate Zn(2+): cysteine 303 and cysteine 308. Residues 372–393 (APEKSSETSEETVTAATADETS) form a disordered region. Over residues 382 to 391 (ETVTAATADE) the composition is skewed to low complexity.

It belongs to the ubiquitin-activating E1 family. UBA5 subfamily.

E1-like enzyme which activates UFM1. The polypeptide is Ubiquitin-like modifier-activating enzyme 5 (Drosophila sechellia (Fruit fly)).